The following is a 189-amino-acid chain: Auxin-responsive protein IAA6 (189 aa).

The EAR-like (transcriptional repression) motif lies at 13–17; sequence LRLGL. Positions 93–178 constitute a PB1 domain; that stretch reads IGYVKVSMDG…SCKRLRIVKR (86 aa).

Belongs to the Aux/IAA family. In terms of assembly, homodimers and heterodimers. Interacts with TPL. Highly expressed in stems and flowers.

It localises to the nucleus. In terms of biological role, aux/IAA proteins are short-lived transcriptional factors that function as repressors of early auxin response genes at low auxin concentrations. Repression is thought to result from the interaction with auxin response factors (ARFs), proteins that bind to the auxin-responsive promoter element (AuxRE). Formation of heterodimers with ARF proteins may alter their ability to modulate early auxin response genes expression. This Arabidopsis thaliana (Mouse-ear cress) protein is Auxin-responsive protein IAA6 (IAA6).